The sequence spans 238 residues: LexA repressor (238 aa).

Positions 26–46 form a DNA-binding region, H-T-H motif; it reads FDEMKDALELRSKSGIHRLIS. Active-site for autocatalytic cleavage activity residues include Ser159 and Lys197.

It belongs to the peptidase S24 family. As to quaternary structure, homodimer.

The enzyme catalyses Hydrolysis of Ala-|-Gly bond in repressor LexA.. In terms of biological role, represses a number of genes involved in the response to DNA damage (SOS response), including recA and lexA. In the presence of single-stranded DNA, RecA interacts with LexA causing an autocatalytic cleavage which disrupts the DNA-binding part of LexA, leading to derepression of the SOS regulon and eventually DNA repair. The sequence is that of LexA repressor from Gluconobacter oxydans (strain 621H) (Gluconobacter suboxydans).